The sequence spans 367 residues: MSLSDQVLAVNDDLPIRTDKPVHSGKVRSVYWLTEEDSRRLIKEKGYNVAPDAPLAIMVISDRISAFDCIWHGEGDLKGIPGKGAALNAISNHWFQLFKDNGLADSHILDIPHPFVWIVQKAKPVMIEAICRQYITGSMWRAYTQGEREFCGITLPERLEKDEQLAELLLTPSTKGILKGIDGVPEVDDVNITRKNIEDNYDKFNFSCIEDIATYEKLLKEGFAVIAKALNKIDQIFVDTKFEFGYVEDAQGNEKLIYMDEVGTPDSSRIWDTKAYRSGHIIENSKEGFRQFLLNHFPEPDILLNKNRMEERFALAEENALPLEAMMDLSKTYLDIAAKITGAPITLSDNPKAEIIKVLKEEYQLVD.

Belongs to the SAICAR synthetase family.

It catalyses the reaction 5-amino-1-(5-phospho-D-ribosyl)imidazole-4-carboxylate + L-aspartate + ATP = (2S)-2-[5-amino-1-(5-phospho-beta-D-ribosyl)imidazole-4-carboxamido]succinate + ADP + phosphate + 2 H(+). Its pathway is purine metabolism; IMP biosynthesis via de novo pathway; 5-amino-1-(5-phospho-D-ribosyl)imidazole-4-carboxamide from 5-amino-1-(5-phospho-D-ribosyl)imidazole-4-carboxylate: step 1/2. This chain is Phosphoribosylaminoimidazole-succinocarboxamide synthase, found in Aliivibrio fischeri (strain ATCC 700601 / ES114) (Vibrio fischeri).